Reading from the N-terminus, the 103-residue chain is UPF0473 protein SGO_2040 (103 aa).

The protein belongs to the UPF0473 family.

The sequence is that of UPF0473 protein SGO_2040 from Streptococcus gordonii (strain Challis / ATCC 35105 / BCRC 15272 / CH1 / DL1 / V288).